Here is a 504-residue protein sequence, read N- to C-terminus: Maturase K (504 aa).

The protein belongs to the intron maturase 2 family. MatK subfamily.

Its subcellular location is the plastid. It localises to the chloroplast. In terms of biological role, usually encoded in the trnK tRNA gene intron. Probably assists in splicing its own and other chloroplast group II introns. The chain is Maturase K from Pentaplaris doroteae.